A 159-amino-acid polypeptide reads, in one-letter code: ATP-dependent Clp protease adapter protein CLPS1, chloroplastic (159 aa).

The N-terminal 44 residues, 1–44 (METAICGRLALAPSSLFNSKSGDKHLVSKGPCVNRSILMTLSTS), are a transit peptide targeting the chloroplast.

This sequence belongs to the ClpS family. As to quaternary structure, interacts with CLPC1 (via N-terminus) and CLPC2, but not with CLPt1 or CLPT2. Binds to ClpF; this interaction stimulates their association with ClpC. As to expression, expressed exclusively in photosynthetic green tissues with high levels in young, developing leaf tissues.

It is found in the plastid. It localises to the chloroplast stroma. Functionally, small adapter protein that modulate the activity of CLPC. Involved in plastid biogenesis in particular when chloroplast protein synthesis capacity is a limiting factor. Probably involved in substrate selection for plastid Clp protease system. Recruitment to ClpC chaperones is facilitated by CLPF thus forming a binary adapter for selective substrate recognition and delivery to plastid Clp protease system (CLPC). The sequence is that of ATP-dependent Clp protease adapter protein CLPS1, chloroplastic from Arabidopsis thaliana (Mouse-ear cress).